We begin with the raw amino-acid sequence, 401 residues long: Argininosuccinate synthase (401 aa).

8 to 16 (AYSGGLDTS) contacts ATP. Residue Y87 participates in L-citrulline binding. G117 is a binding site for ATP. Residues T119, N123, and D124 each coordinate L-aspartate. N123 is an L-citrulline binding site. L-citrulline-binding residues include R127, S175, E259, and Y271.

Belongs to the argininosuccinate synthase family. Type 1 subfamily. In terms of assembly, homotetramer.

Its subcellular location is the cytoplasm. It carries out the reaction L-citrulline + L-aspartate + ATP = 2-(N(omega)-L-arginino)succinate + AMP + diphosphate + H(+). It functions in the pathway amino-acid biosynthesis; L-arginine biosynthesis; L-arginine from L-ornithine and carbamoyl phosphate: step 2/3. This is Argininosuccinate synthase from Arthrobacter sp. (strain FB24).